A 724-amino-acid chain; its full sequence is Golgin subfamily A member 6-like protein 6 (724 aa).

Disordered regions lie at residues 1–108 (MLMW…HQEA), 314–342 (QEEK…MRRQ), 374–454 (MHEQ…EMWR), 517–548 (QEEM…KMWR), and 561–724 (WRQE…MQEH). Over residues 15-29 (LPTHPHLPTHPHLPT) the composition is skewed to basic residues. Basic and acidic residues predominate over residues 39–60 (MSKETRQSKLAEAKEQLTDHHP). Composition is skewed to polar residues over residues 61–71 (QTNPSVGTAAS) and 79–91 (NNGT…TSGG). The span at 94 to 108 (SPEDEQKASHQHQEA) shows a compositional bias: basic and acidic residues. Residues 164 to 686 (ELEQALSAVA…EKMWEQEEKM (523 aa)) adopt a coiled-coil conformation.

Belongs to the GOLGA6 family.

The protein is Golgin subfamily A member 6-like protein 6 (GOLGA6L6) of Homo sapiens (Human).